Here is a 206-residue protein sequence, read N- to C-terminus: ATP-dependent Clp protease proteolytic subunit 1 (206 aa).

The Nucleophile role is filled by Ser103. The active site involves His128.

Belongs to the peptidase S14 family. As to quaternary structure, fourteen ClpP subunits assemble into 2 heptameric rings which stack back to back to give a disk-like structure with a central cavity, resembling the structure of eukaryotic proteasomes.

The protein localises to the cytoplasm. The enzyme catalyses Hydrolysis of proteins to small peptides in the presence of ATP and magnesium. alpha-casein is the usual test substrate. In the absence of ATP, only oligopeptides shorter than five residues are hydrolyzed (such as succinyl-Leu-Tyr-|-NHMec, and Leu-Tyr-Leu-|-Tyr-Trp, in which cleavage of the -Tyr-|-Leu- and -Tyr-|-Trp bonds also occurs).. Cleaves peptides in various proteins in a process that requires ATP hydrolysis. Has a chymotrypsin-like activity. Plays a major role in the degradation of misfolded proteins. In Protochlamydia amoebophila (strain UWE25), this protein is ATP-dependent Clp protease proteolytic subunit 1.